The primary structure comprises 802 residues: E3 ubiquitin-protein ligase RNF10 (802 aa).

Low complexity-rich tracts occupy residues 1–31 (MPQS…SGSS), 78–90 (SNQS…QKSK), and 104–113 (SKPFSSSSNG). Positions 1–134 (MPQSSPSTAA…AEFSPAQFSG (134 aa)) are disordered. Phosphoserine is present on S5. Phosphoserine is present on S110. Over residues 114–124 (GRRDEVAEAQR) the composition is skewed to basic and acidic residues. S128 carries the post-translational modification Phosphoserine. The RING-type zinc-finger motif lies at 225–267 (CPICLYPPTAAKITRCGHIFCWACILHYLSLSERTWSKCPICY). The span at 645–654 (DSALGPTSTE) shows a compositional bias: polar residues. Disordered regions lie at residues 645–664 (DSAL…LSPL), 716–753 (DGWP…VPSF), and 767–802 (KLDT…VHTK). Basic and acidic residues predominate over residues 716-728 (DGWPKAAPKKDDN). Residues 793 to 802 (LFSTSVVHTK) are compositionally biased toward polar residues.

It belongs to the RNF10 family. In terms of assembly, interacts with MEOX2.

It localises to the cytoplasm. It is found in the nucleus. It carries out the reaction S-ubiquitinyl-[E2 ubiquitin-conjugating enzyme]-L-cysteine + [acceptor protein]-L-lysine = [E2 ubiquitin-conjugating enzyme]-L-cysteine + N(6)-ubiquitinyl-[acceptor protein]-L-lysine.. The protein operates within protein modification; protein ubiquitination. Its function is as follows. E3 ubiquitin-protein ligase that catalyzes monoubiquitination of 40S ribosomal proteins RPS2/us5 and RPS3/us3 in response to ribosome stalling. Part of a ribosome quality control that takes place when ribosomes have stalled during translation initiation (iRQC): RNF10 acts by mediating monoubiquitination of RPS2/us5 and RPS3/us3, promoting their degradation by the proteasome. Also promotes ubiquitination of 40S ribosomal proteins in response to ribosome stalling during translation elongation. The action of RNF10 in iRQC is counteracted by USP10. May also act as a transcriptional factor involved in the regulation of MAG (Myelin-associated glycoprotein) expression. Acts as a regulator of Schwann cell differentiation and myelination. The chain is E3 ubiquitin-protein ligase RNF10 from Rattus norvegicus (Rat).